Consider the following 275-residue polypeptide: Large ribosomal subunit protein uL2cz (275 aa).

2 disordered regions span residues Met1 to Val22 and Asn226 to Lys275.

It belongs to the universal ribosomal protein uL2 family. As to quaternary structure, part of the 50S ribosomal subunit.

It localises to the plastid. The protein localises to the chloroplast. In Chloranthus spicatus (Chulantree), this protein is Large ribosomal subunit protein uL2cz (rpl2-A).